The sequence spans 160 residues: Putative UPF0479 protein YBL113W-A (160 aa).

2 helical membrane-spanning segments follow: residues 39–59 (IVFC…KVLQ) and 136–156 (VPMI…ISQH).

It belongs to the UPF0479 family.

Its subcellular location is the membrane. This is Putative UPF0479 protein YBL113W-A from Saccharomyces cerevisiae (strain ATCC 204508 / S288c) (Baker's yeast).